We begin with the raw amino-acid sequence, 599 residues long: Elongation factor 4 (599 aa).

Residues 2–184 (KNIRNFSIIA…RLVRDIPPPE (183 aa)) form the tr-type G domain. GTP-binding positions include 14–19 (DHGKST) and 131–134 (NKID).

The protein belongs to the TRAFAC class translation factor GTPase superfamily. Classic translation factor GTPase family. LepA subfamily.

The protein resides in the cell inner membrane. The catalysed reaction is GTP + H2O = GDP + phosphate + H(+). Its function is as follows. Required for accurate and efficient protein synthesis under certain stress conditions. May act as a fidelity factor of the translation reaction, by catalyzing a one-codon backward translocation of tRNAs on improperly translocated ribosomes. Back-translocation proceeds from a post-translocation (POST) complex to a pre-translocation (PRE) complex, thus giving elongation factor G a second chance to translocate the tRNAs correctly. Binds to ribosomes in a GTP-dependent manner. The polypeptide is Elongation factor 4 (Cronobacter sakazakii (strain ATCC BAA-894) (Enterobacter sakazakii)).